We begin with the raw amino-acid sequence, 62 residues long: Large ribosomal subunit protein bL32 (62 aa).

The segment at 1–20 (MAVPARHTSKQKKRSRRGHI) is disordered. The segment covering 7 to 20 (HTSKQKKRSRRGHI) has biased composition (basic residues).

The protein belongs to the bacterial ribosomal protein bL32 family.

The protein is Large ribosomal subunit protein bL32 of Lactobacillus acidophilus (strain ATCC 700396 / NCK56 / N2 / NCFM).